The chain runs to 365 residues: tRNA(Met) cytidine acetate ligase (365 aa).

ATP contacts are provided by residues 7–20, glycine 96, asparagine 152, and arginine 175; that span reads IAEFNPFHNGHKYL.

The protein belongs to the TmcAL family.

Its subcellular location is the cytoplasm. It carries out the reaction cytidine(34) in elongator tRNA(Met) + acetate + ATP = N(4)-acetylcytidine(34) in elongator tRNA(Met) + AMP + diphosphate. Functionally, catalyzes the formation of N(4)-acetylcytidine (ac(4)C) at the wobble position of elongator tRNA(Met), using acetate and ATP as substrates. First activates an acetate ion to form acetyladenylate (Ac-AMP) and then transfers the acetyl group to tRNA to form ac(4)C34. The protein is tRNA(Met) cytidine acetate ligase of Streptococcus pneumoniae (strain ATCC 700669 / Spain 23F-1).